We begin with the raw amino-acid sequence, 353 residues long: Guanine nucleotide-binding protein subunit alpha (353 aa).

Positions 1-25 are disordered; that stretch reads MGCGMSTEDKEGKARNEEIENQLKR. Residue Gly2 is the site of N-myristoyl glycine attachment. Residue Cys3 is the site of S-palmitoyl cysteine attachment. Residues 7–25 show a composition bias toward basic and acidic residues; the sequence is TEDKEGKARNEEIENQLKR. Positions 32 to 353 constitute a G-alpha domain; sequence NEIKMLLLGA…QENLRLCGLI (322 aa). The segment at 35-48 is G1 motif; it reads KMLLLGAGESGKST. The GTP site is built by Glu43, Ser44, Gly45, Lys46, Ser47, Thr48, Asp150, Leu175, Thr181, Gly203, Asn269, Lys270, Asp272, and Ala325. Mg(2+) is bound at residue Ser47. Positions 173 to 181 are G2 motif; the sequence is DVLRSRVKT. Position 181 (Thr181) interacts with Mg(2+). The tract at residues 196–205 is G3 motif; it reads YRMFDVGGQR. The segment at 265-272 is G4 motif; that stretch reads ILFLNKID. Residues 323-328 are G5 motif; it reads TCATDT.

It belongs to the G-alpha family. G(q) subfamily. In terms of assembly, g proteins are composed of 3 units; alpha, beta and gamma. The alpha chain contains the guanine nucleotide binding site. It depends on Mg(2+) as a cofactor.

Its function is as follows. Guanine nucleotide-binding proteins (G proteins) are involved as modulators or transducers in various transmembrane signaling systems. This chain is Guanine nucleotide-binding protein subunit alpha (CTG1), found in Colletotrichum trifolii.